A 160-amino-acid polypeptide reads, in one-letter code: Large ribosomal subunit protein uL22c (160 aa).

It belongs to the universal ribosomal protein uL22 family. In terms of assembly, part of the 50S ribosomal subunit.

It localises to the plastid. It is found in the chloroplast. Its function is as follows. This protein binds specifically to 23S rRNA. The globular domain of the protein is located near the polypeptide exit tunnel on the outside of the subunit, while an extended beta-hairpin is found that lines the wall of the exit tunnel in the center of the 70S ribosome. The chain is Large ribosomal subunit protein uL22c (rpl22) from Aethionema grandiflorum (Persian stone-cress).